We begin with the raw amino-acid sequence, 214 residues long: uncharacterized protein (214 aa).

Residues 1–17 (MLKKIIILFLGVFVLSG) form the signal peptide. Cysteine 18 carries the N-palmitoyl cysteine lipid modification. Cysteine 18 carries S-diacylglycerol cysteine lipidation. A compositionally biased stretch (acidic residues) spans 64–77 (DNLDDPEDDDDDYD). Disordered regions lie at residues 64–83 (DNLD…LRGE), 106–138 (YKAE…KERK), and 166–197 (TANQ…SKVK). Residues 120–162 (TLSKANKKVRKDNTDKERKMQEELDQIKAMLRETKRDISKYTC) are a coiled coil.

The protein resides in the cell membrane. This is an uncharacterized protein from Rickettsia bellii (strain RML369-C).